A 523-amino-acid chain; its full sequence is 2-isopropylmalate synthase (523 aa).

Positions V5 to H267 constitute a Pyruvate carboxyltransferase domain. Mn(2+) is bound by residues D14, H202, H204, and N238. The interval G392 to V523 is regulatory domain.

This sequence belongs to the alpha-IPM synthase/homocitrate synthase family. LeuA type 1 subfamily. In terms of assembly, homodimer. It depends on Mn(2+) as a cofactor.

It is found in the cytoplasm. The enzyme catalyses 3-methyl-2-oxobutanoate + acetyl-CoA + H2O = (2S)-2-isopropylmalate + CoA + H(+). Its pathway is amino-acid biosynthesis; L-leucine biosynthesis; L-leucine from 3-methyl-2-oxobutanoate: step 1/4. Its function is as follows. Catalyzes the condensation of the acetyl group of acetyl-CoA with 3-methyl-2-oxobutanoate (2-ketoisovalerate) to form 3-carboxy-3-hydroxy-4-methylpentanoate (2-isopropylmalate). The chain is 2-isopropylmalate synthase from Shewanella loihica (strain ATCC BAA-1088 / PV-4).